Consider the following 345-residue polypeptide: Olfactory receptor 11G2 (345 aa).

Over 1-62 (MHFLSQNDLN…LGFPCPREGQ (62 aa)) the chain is Extracellular. Asn43 carries N-linked (GlcNAc...) asparagine glycosylation. A helical membrane pass occupies residues 63–83 (ILLFVLFTVVYLLTLMGNGSI). Residues 84-92 (ICAVHWDQR) are Cytoplasmic-facing. The chain crosses the membrane as a helical span at residues 93-113 (LHAPMYILLANFSFLEICYVT). Topologically, residues 114-135 (STVPSMLANFLSDTKIISFSGC) are extracellular. Cys135 and Cys217 are disulfide-bonded. A helical membrane pass occupies residues 136–156 (FLQFYFFFSLGSTECFFLAVM). The Cytoplasmic portion of the chain corresponds to 157–181 (AFDRYLAICRPLRYPTIMTRRLCTN). Residues 182–202 (LVVNCWVLGFIWFLIPIVNIS) form a helical membrane-spanning segment. Residues 203–241 (QMSFCGSRIIDHFLCDPAPLLTLTCKKGPVIELVFSVLS) are Extracellular-facing. The chain crosses the membrane as a helical span at residues 242-264 (PLPVFMLFLFIVGSYALVVRAVL). Over 265 to 275 (RVPSAAGRRKA) the chain is Cytoplasmic. Residues 276–296 (FSTCGSHLAVVSLFYGSVLVM) form a helical membrane-spanning segment. Residues 297 to 309 (YGSPPSKNEAGKQ) are Extracellular-facing. A helical membrane pass occupies residues 310–330 (KTVTLFYSVVTPLLNPVIYSL). Residues 331 to 345 (RNKDMRKALKKFWGT) lie on the Cytoplasmic side of the membrane.

The protein belongs to the G-protein coupled receptor 1 family.

The protein resides in the cell membrane. In terms of biological role, odorant receptor. The chain is Olfactory receptor 11G2 (OR11G2) from Homo sapiens (Human).